The following is a 353-amino-acid chain: GDP-mannose transporter (353 aa).

Residues 1–31 (MGLLLSYLFGYIFYSVNKKFHIMEKFGASNS) are Cytoplasmic-facing. A helical membrane pass occupies residues 32-52 (IVNNGPVSIFAYCASSILMTV). The Lumenal segment spans residues 53–66 (TNKFVVGAYEFNLN). A helical membrane pass occupies residues 67 to 87 (FFLLAVQAAVCLVTIATLKGL). The Cytoplasmic segment spans residues 88–102 (GIITYRQFNKDEAKK). The helical transmembrane segment at 103 to 122 (WFPIAFLLVLMIYTSSKALQ) threads the bilayer. Residues 123–125 (YLS) are Lumenal-facing. A helical transmembrane segment spans residues 126-148 (IPVYTIFKNLTIILIAYGEVIWF). At 149 to 154 (GGKVTT) the chain is on the cytoplasmic side. The chain crosses the membrane as a helical span at residues 155 to 172 (MALGSFILMVLSSVIAYY). Residues 173-187 (GDTAETGEKTAEMHL) lie on the Lumenal side of the membrane. The chain crosses the membrane as a helical span at residues 188–208 (LYLGYAWMFTNCFSSAAFVLI). Residues 209 to 227 (MRKRIKLTNFKDFDTMYYN) lie on the Cytoplasmic side of the membrane. Residues 228–248 (NLLSLPLLLVFSFLFEDWSSV) form a helical membrane-spanning segment. Topologically, residues 249–262 (NLNKNFPPDNRNTT) are lumenal. Asparagine 260 carries N-linked (GlcNAc...) asparagine glycosylation. A helical membrane pass occupies residues 263 to 283 (IFVMILSGASSVGISYCSAWC). Over 284–290 (VRVTSST) the chain is Cytoplasmic. A helical membrane pass occupies residues 291–313 (TYSMVGALNKLPIALSGLVFFNA). Residues 314-316 (AVN) are Lumenal-facing. Residues 317–336 (FWSVSSIFVGFLAGVFYAVA) form a helical membrane-spanning segment. Residues 337 to 353 (KQKQQKENAQQLPVANK) are Cytoplasmic-facing.

It belongs to the TPT transporter family. SLC35D subfamily. In terms of assembly, homooligomer.

The protein localises to the golgi apparatus membrane. The protein resides in the cytoplasmic vesicle membrane. It localises to the endoplasmic reticulum membrane. Its function is as follows. Involved in the import of GDP-mannose from the cytoplasm into the Golgi lumen. This is GDP-mannose transporter (VRG4) from Meyerozyma guilliermondii (strain ATCC 6260 / CBS 566 / DSM 6381 / JCM 1539 / NBRC 10279 / NRRL Y-324) (Yeast).